The primary structure comprises 247 residues: Segregation and condensation protein A (247 aa).

It belongs to the ScpA family. In terms of assembly, component of a cohesin-like complex composed of ScpA, ScpB and the Smc homodimer, in which ScpA and ScpB bind to the head domain of Smc. The presence of the three proteins is required for the association of the complex with DNA.

The protein resides in the cytoplasm. Participates in chromosomal partition during cell division. May act via the formation of a condensin-like complex containing Smc and ScpB that pull DNA away from mid-cell into both cell halves. This is Segregation and condensation protein A from Lactobacillus gasseri (strain ATCC 33323 / DSM 20243 / BCRC 14619 / CIP 102991 / JCM 1131 / KCTC 3163 / NCIMB 11718 / NCTC 13722 / AM63).